Here is a 574-residue protein sequence, read N- to C-terminus: Calcium-dependent protein kinase 9 (574 aa).

A disordered region spans residues 1–64 (MGNTCCVAPA…RARAKPNPYD (64 aa)). A lipid anchor (N-myristoyl glycine) is attached at Gly2. Positions 28–40 (KSPAPSATTTTAT) are enriched in low complexity. Positions 101 to 359 (YQLGRELGRG…AQQVLDHPWL (259 aa)) constitute a Protein kinase domain. ATP contacts are provided by residues 107 to 115 (LGRGEFGVT) and Lys130. Residue Asp225 is the Proton acceptor of the active site. Residues 365-395 (APNVPLGDVVRARLKQFSLMNRLKKKAMRVI) form an autoinhibitory domain region. EF-hand domains are found at residues 402-437 (EEVE…VGSK), 438-473 (LAEP…LQRL), 474-509 (SNDN…DSGH), and 510-545 (ADDA…GTDW). Ca(2+)-binding residues include Asp415, Asp417, Asn419, Arg421, Glu426, Asp451, Asp453, Asn455, Tyr457, Glu462, Asp487, Asp489, Ser491, Tyr493, Glu498, Asp523, Asp525, Asp527, Arg529, and Glu534.

This sequence belongs to the protein kinase superfamily. Ser/Thr protein kinase family. CDPK subfamily. In terms of tissue distribution, expressed in leaf blades and stems. Expressed at low levels in anthers and spikelets.

It is found in the membrane. It catalyses the reaction L-seryl-[protein] + ATP = O-phospho-L-seryl-[protein] + ADP + H(+). It carries out the reaction L-threonyl-[protein] + ATP = O-phospho-L-threonyl-[protein] + ADP + H(+). With respect to regulation, activated by calcium. Autophosphorylation may play an important role in the regulation of the kinase activity. Its function is as follows. May play a role in signal transduction pathways that involve calcium as a second messenger. Functions in signal transduction pathways that positively regulate responses to drought, osmotic, and dehydration stress. Regulates expression of stress-associated genes in response to drought. Involved in tolerance to drought stress by increasing proline and soluble sugars, and improving stomatal closure. Required for pollen maturation and spikelet fertility. The protein is Calcium-dependent protein kinase 9 of Oryza sativa subsp. japonica (Rice).